We begin with the raw amino-acid sequence, 401 residues long: MHNAKGLLGRIVRDKLWRFGYRRSLCSLKLTSEDLDYQVLVEGSGCSRTAILNRPPALNALTTHMGYRLQKLYKNWEEDPNIGFVMMKGSGRAFCAGGDIVSLYHLRTRGSPDAIREFFSSLYSFIYLLGTYLKPHVAILNGVTMGGGTGVSIPGTFRVATDRTIFATPETIIGFHPDAGASFNLSHLPGRLGEYLGLTGLKLSGAEMLACGLATHYIRSEEVPVMEEQLKKLLTDDPSVVESCLEKCAEVAHPEKTGVIRRIDLLEKCFSHDTVEEIIDSLEIEASRRKDTWCITTLRRLKESSPLSLKVALRSIREGRLQTLDQCLIREYRMSLQGLIGPMSGNFCEGVRARLIDKDEAPKWDPPSLEKVSEDMVDDYFCALTPTEPDLDLPVKLRESI.

The N-terminal 26 residues, 1 to 26 (MHNAKGLLGRIVRDKLWRFGYRRSLC), are a transit peptide targeting the mitochondrion.

Belongs to the enoyl-CoA hydratase/isomerase family.

The protein resides in the mitochondrion. The chain is 3-hydroxyisobutyryl-CoA hydrolase-like protein 1, mitochondrial from Arabidopsis thaliana (Mouse-ear cress).